Here is a 93-residue protein sequence, read N- to C-terminus: MSRSIKKGPFIDDHLMKKTLKAKESKDNRPIKTWSRRSTILPEMIGFTYNVHNGRVFIPVYITENHVGYKLGEFAPTRTFKGHKGSVQKKIGK.

Belongs to the universal ribosomal protein uS19 family.

Protein S19 forms a complex with S13 that binds strongly to the 16S ribosomal RNA. The protein is Small ribosomal subunit protein uS19 of Helicobacter acinonychis (strain Sheeba).